A 197-amino-acid chain; its full sequence is Negative modulator of initiation of replication (197 aa).

It belongs to the SeqA family. In terms of assembly, homodimer. Polymerizes to form helical filaments.

It localises to the cytoplasm. Negative regulator of replication initiation, which contributes to regulation of DNA replication and ensures that replication initiation occurs exactly once per chromosome per cell cycle. Binds to pairs of hemimethylated GATC sequences in the oriC region, thus preventing assembly of replication proteins and re-initiation at newly replicated origins. Repression is relieved when the region becomes fully methylated. This chain is Negative modulator of initiation of replication, found in Pseudoalteromonas translucida (strain TAC 125).